Here is a 395-residue protein sequence, read N- to C-terminus: NAD(P)H-quinone oxidoreductase subunit H, chloroplastic (395 aa).

Belongs to the complex I 49 kDa subunit family. NDH is composed of at least 16 different subunits, 5 of which are encoded in the nucleus.

Its subcellular location is the plastid. It localises to the chloroplast thylakoid membrane. It carries out the reaction a plastoquinone + NADH + (n+1) H(+)(in) = a plastoquinol + NAD(+) + n H(+)(out). The catalysed reaction is a plastoquinone + NADPH + (n+1) H(+)(in) = a plastoquinol + NADP(+) + n H(+)(out). In terms of biological role, NDH shuttles electrons from NAD(P)H:plastoquinone, via FMN and iron-sulfur (Fe-S) centers, to quinones in the photosynthetic chain and possibly in a chloroplast respiratory chain. The immediate electron acceptor for the enzyme in this species is believed to be plastoquinone. Couples the redox reaction to proton translocation, and thus conserves the redox energy in a proton gradient. This is NAD(P)H-quinone oxidoreductase subunit H, chloroplastic from Staurastrum punctulatum (Green alga).